Reading from the N-terminus, the 146-residue chain is Transcriptional regulator MraZ (146 aa).

2 SpoVT-AbrB domains span residues 5–47 and 76–119; these read EYYH…TITD and SIQV…AKEK.

This sequence belongs to the MraZ family. As to quaternary structure, forms oligomers.

The protein localises to the cytoplasm. It localises to the nucleoid. This Dictyoglomus thermophilum (strain ATCC 35947 / DSM 3960 / H-6-12) protein is Transcriptional regulator MraZ.